Here is a 165-residue protein sequence, read N- to C-terminus: Putative inactive neutral ceramidase B (165 aa).

The protein belongs to the neutral ceramidase family. In terms of tissue distribution, ubiquitous. Expression is reduced with increasing age and in late-onset Alzheimer disease (LOAD) patients. This reduction is even more pronounced in patients with an affected mother.

This Homo sapiens (Human) protein is Putative inactive neutral ceramidase B.